The chain runs to 399 residues: Protein TWIN LOV 1 (399 aa).

The 72-residue stretch at 26–97 (LWIKEALEEL…MEIREAIREE (72 aa)) folds into the PAS 1 domain. The 56-residue stretch at 98–153 (RSVQVSLLNYRKSGSPFWMLFHMCPVFGKDDGKVTNFVAVQVPISGREHHRKKLRN) folds into the PAC 1 domain. Positions 249–320 (SLVISLGRIK…EMKECILKGQ (72 aa)) constitute a PAS 2 domain. Position 296 is an S-4a-FMN cysteine (Cys296). The region spanning 320-376 (QSCTVQILNYSNRKDKSSFWNLLHISPVRNASGKTAYFVGVQVEASCRNTEIKELRP) is the PAC 2 domain.

As to quaternary structure, interacts with VTC2, VTC5 and BLH10. In terms of processing, FMN binds covalently to cysteine after exposure to blue light and is reversed in the dark.

In Arabidopsis thaliana (Mouse-ear cress), this protein is Protein TWIN LOV 1 (TLP1).